A 319-amino-acid chain; its full sequence is Glycine--tRNA ligase alpha subunit (319 aa).

The protein belongs to the class-II aminoacyl-tRNA synthetase family. In terms of assembly, tetramer of two alpha and two beta subunits.

The protein localises to the cytoplasm. It catalyses the reaction tRNA(Gly) + glycine + ATP = glycyl-tRNA(Gly) + AMP + diphosphate. The chain is Glycine--tRNA ligase alpha subunit from Oenococcus oeni (strain ATCC BAA-331 / PSU-1).